Consider the following 431-residue polypeptide: O-phosphoseryl-tRNA(Sec) selenium transferase (431 aa).

The tract at residues 1–36 (MRGLIPDHMLERGRTVLDSYREPVERLLSERRMPEE) is tetramerization. Arg-67 contacts pyridoxal 5'-phosphate. The tract at residues 88–98 (GRSGTLVDPQP) is phosphate loop (P-loop). Arg-89, Ser-90, and Gln-97 together coordinate substrate. The residue at position 269 (Lys-269) is an N6-(pyridoxal phosphate)lysine. Arg-298 is a substrate binding site.

Belongs to the SepSecS family. As to quaternary structure, homotetramer. It depends on pyridoxal 5'-phosphate as a cofactor.

The catalysed reaction is O-phospho-L-seryl-tRNA(Sec) + selenophosphate + H2O = L-selenocysteinyl-tRNA(Sec) + 2 phosphate. Its pathway is aminoacyl-tRNA biosynthesis; selenocysteinyl-tRNA(Sec) biosynthesis; selenocysteinyl-tRNA(Sec) from L-seryl-tRNA(Sec) (archaeal/eukaryal route): step 2/2. Converts O-phosphoseryl-tRNA(Sec) to selenocysteinyl-tRNA(Sec) required for selenoprotein biosynthesis. The sequence is that of O-phosphoseryl-tRNA(Sec) selenium transferase (spcS) from Methanopyrus kandleri (strain AV19 / DSM 6324 / JCM 9639 / NBRC 100938).